An 82-amino-acid chain; its full sequence is Putative membrane protein insertion efficiency factor (82 aa).

The interval 63–82 (GGFDPVPLKKDKNSKTTHHH) is disordered.

This sequence belongs to the UPF0161 family.

It is found in the cell membrane. Functionally, could be involved in insertion of integral membrane proteins into the membrane. The protein is Putative membrane protein insertion efficiency factor of Staphylococcus epidermidis (strain ATCC 35984 / DSM 28319 / BCRC 17069 / CCUG 31568 / BM 3577 / RP62A).